A 452-amino-acid chain; its full sequence is Phosphoglucosamine mutase (452 aa).

Catalysis depends on Ser-88, which acts as the Phosphoserine intermediate. Residues Ser-88, Asp-234, Asp-236, and Asp-238 each contribute to the Mg(2+) site. Ser-88 bears the Phosphoserine mark.

Belongs to the phosphohexose mutase family. Requires Mg(2+) as cofactor. Activated by phosphorylation.

The enzyme catalyses alpha-D-glucosamine 1-phosphate = D-glucosamine 6-phosphate. Catalyzes the conversion of glucosamine-6-phosphate to glucosamine-1-phosphate. The polypeptide is Phosphoglucosamine mutase (Methanococcus aeolicus (strain ATCC BAA-1280 / DSM 17508 / OCM 812 / Nankai-3)).